Here is a 395-residue protein sequence, read N- to C-terminus: Crh-like protein 5 (395 aa).

The signal sequence occupies residues 1 to 19; sequence MYFKYTAAALAAVLPLCSA. Cys-25 and Cys-32 form a disulfide bridge. Residues 45 to 230 enclose the GH16 domain; that stretch reads ADFTSASALD…WAGGLTDYSA (186 aa). Glu-119 (nucleophile) is an active-site residue. The active-site Proton donor is Glu-123. Chitin contacts are provided by Glu-123, Arg-203, Trp-207, and Thr-218. Positions 271–374 are disordered; the sequence is ISSSSSVTSS…PELSQGAAGS (104 aa). Low complexity-rich tracts occupy residues 272–338 and 348–364; these read SSSS…SNTG and GSSSSTGSSTSAGASAT. Asn-319 is a glycosylation site (N-linked (GlcNAc...) asparagine). A lipid anchor (GPI-like-anchor amidated glycine) is attached at Gly-370. Positions 371–395 are cleaved as a propeptide — removed in mature form; sequence AAGSIKGSVTACALVFGAVAAVLAF.

This sequence belongs to the glycosyl hydrolase 16 family. CRH1 subfamily. In terms of processing, the GPI-like anchor contains a phosphoceramide lipid group. The anchor position has not been determined.

The protein localises to the cell membrane. It is found in the secreted. The protein resides in the cell wall. It carries out the reaction Random endo-hydrolysis of N-acetyl-beta-D-glucosaminide (1-&gt;4)-beta-linkages in chitin and chitodextrins.. Dual chitinase/transglycosylase that plays a role in cell wall architecture. Chitinase and transglycosylase activities are coupled. Required for the polysaccharide cross-linking at the septa and the cell wall. More specifically, transfers chitin to 1,6-beta-glucan in the cell wall. Chr5 shows acceptor substrate promiscuity and is also able to cross-link chitin to chitin. The protein is Crh-like protein 5 of Aspergillus fumigatus (strain ATCC MYA-4609 / CBS 101355 / FGSC A1100 / Af293) (Neosartorya fumigata).